Reading from the N-terminus, the 331-residue chain is Pyruvate synthase subunit PorB (331 aa).

The [4Fe-4S] cluster site is built by cysteine 21, cysteine 24, cysteine 59, and cysteine 222.

As to quaternary structure, heterotetramer of one alpha, one beta, one delta and one gamma chain. The cofactor is [4Fe-4S] cluster.

The catalysed reaction is 2 oxidized [2Fe-2S]-[ferredoxin] + pyruvate + CoA = 2 reduced [2Fe-2S]-[ferredoxin] + acetyl-CoA + CO2 + H(+). This is Pyruvate synthase subunit PorB (porB) from Pyrococcus furiosus (strain ATCC 43587 / DSM 3638 / JCM 8422 / Vc1).